The primary structure comprises 361 residues: Holliday junction branch migration complex subunit RuvB (361 aa).

The interval 1 to 25 (MSIHTDDFGQGGFAQGGFPPDKAPD) is disordered. The large ATPase domain (RuvB-L) stretch occupies residues 5 to 207 (TDDFGQGGFA…FGIVARLEFY (203 aa)). ATP-binding positions include Leu-46, Arg-47, Gly-88, Lys-91, Thr-92, Thr-93, 154–156 (EDY), Arg-197, Tyr-207, and Arg-244. Thr-92 serves as a coordination point for Mg(2+). Positions 208 to 278 (TAEELARIVR…LADRALAMLD (71 aa)) are small ATPAse domain (RuvB-S). The segment at 281 to 361 (PQGFDIMDRK…GLPVPGDDAS (81 aa)) is head domain (RuvB-H). Residues Arg-336 and Arg-341 each coordinate DNA.

The protein belongs to the RuvB family. As to quaternary structure, homohexamer. Forms an RuvA(8)-RuvB(12)-Holliday junction (HJ) complex. HJ DNA is sandwiched between 2 RuvA tetramers; dsDNA enters through RuvA and exits via RuvB. An RuvB hexamer assembles on each DNA strand where it exits the tetramer. Each RuvB hexamer is contacted by two RuvA subunits (via domain III) on 2 adjacent RuvB subunits; this complex drives branch migration. In the full resolvosome a probable DNA-RuvA(4)-RuvB(12)-RuvC(2) complex forms which resolves the HJ.

The protein localises to the cytoplasm. The enzyme catalyses ATP + H2O = ADP + phosphate + H(+). Its function is as follows. The RuvA-RuvB-RuvC complex processes Holliday junction (HJ) DNA during genetic recombination and DNA repair, while the RuvA-RuvB complex plays an important role in the rescue of blocked DNA replication forks via replication fork reversal (RFR). RuvA specifically binds to HJ cruciform DNA, conferring on it an open structure. The RuvB hexamer acts as an ATP-dependent pump, pulling dsDNA into and through the RuvAB complex. RuvB forms 2 homohexamers on either side of HJ DNA bound by 1 or 2 RuvA tetramers; 4 subunits per hexamer contact DNA at a time. Coordinated motions by a converter formed by DNA-disengaged RuvB subunits stimulates ATP hydrolysis and nucleotide exchange. Immobilization of the converter enables RuvB to convert the ATP-contained energy into a lever motion, pulling 2 nucleotides of DNA out of the RuvA tetramer per ATP hydrolyzed, thus driving DNA branch migration. The RuvB motors rotate together with the DNA substrate, which together with the progressing nucleotide cycle form the mechanistic basis for DNA recombination by continuous HJ branch migration. Branch migration allows RuvC to scan DNA until it finds its consensus sequence, where it cleaves and resolves cruciform DNA. The sequence is that of Holliday junction branch migration complex subunit RuvB from Delftia acidovorans (strain DSM 14801 / SPH-1).